Consider the following 301-residue polypeptide: Acetylglutamate kinase (301 aa).

Substrate contacts are provided by residues 76-77 (GG), Arg98, and Asn192.

This sequence belongs to the acetylglutamate kinase family. ArgB subfamily.

The protein resides in the cytoplasm. The catalysed reaction is N-acetyl-L-glutamate + ATP = N-acetyl-L-glutamyl 5-phosphate + ADP. It participates in amino-acid biosynthesis; L-arginine biosynthesis; N(2)-acetyl-L-ornithine from L-glutamate: step 2/4. Functionally, catalyzes the ATP-dependent phosphorylation of N-acetyl-L-glutamate. This chain is Acetylglutamate kinase, found in Chlorobaculum parvum (strain DSM 263 / NCIMB 8327) (Chlorobium vibrioforme subsp. thiosulfatophilum).